The chain runs to 670 residues: Solute carrier organic anion transporter family member 1A1 (670 aa).

Over 1-20 (MEETEKKVATQEGRFFSKMK) the chain is Cytoplasmic. Residues 21–40 (VFLMSLTCAYLAKSLSGVYM) form a helical membrane-spanning segment. At 41 to 59 (NSMLTQIERQFGIPTSVVG) the chain is on the extracellular side. A helical transmembrane segment spans residues 60–80 (FITGSFEIGNLLLIVFVSYFG). Residues 81-86 (RKLHRP) lie on the Cytoplasmic side of the membrane. The chain crosses the membrane as a helical span at residues 87–111 (IIIGVGCVVMGLGCFLMASPHFLMG). The Extracellular segment spans residues 112–155 (RYKYETTISPTSNLSSNSFLCIENRTQTLKPTQDPTECVKEIKS). Residues Asn-124 and Asn-135 are each glycosylated (N-linked (GlcNAc...) asparagine). A helical transmembrane segment spans residues 156-184 (LMWIYVLIGNTMRGIGETPIMPLGISYIE). At 185 to 203 (DFAKSENSPLYIGILEMGK) the chain is on the cytoplasmic side. The chain crosses the membrane as a helical span at residues 204 to 224 (IVGPIIGLLLGSFFARVYVDI). The Extracellular portion of the chain corresponds to 225–242 (GSVNTDDLTITPTDTRWV). Residues 243–267 (GAWWIGFLVCAGVNILTSIPFFFFP) traverse the membrane as a helical segment. At 268 to 311 (KTLPKKELQDNVDVTKYEKVEKHRERAKKENLGITKDFLPFMKS) the chain is on the cytoplasmic side. Residues 312-333 (LCCNPIYMLFSLTSVLQINGFA) form a helical membrane-spanning segment. Over 334 to 353 (STFTFLPKYLEQQYGKSTSE) the chain is Extracellular. Residues 354–377 (AVFLIGVYSLPPVCLGYLISGFIM) traverse the membrane as a helical segment. The Cytoplasmic portion of the chain corresponds to 378–381 (KKFK). Residues 382–405 (ITVKKAAYIAFGLSLSEYFIFLCN) form a helical membrane-spanning segment. The Extracellular segment spans residues 406 to 513 (YLLTCDNFPV…PECDNKLQYF (108 aa)). The Kazal-like domain occupies 433–488 (KNVLADCNTRCSCLTDTWDPVCGDNGLAYMSACLAGCEKSVGTGTNMVFQNCSCIG). 3 disulfides stabilise this stretch: Cys-439/Cys-469, Cys-445/Cys-465, and Cys-454/Cys-486. N-linked (GlcNAc...) asparagine glycosylation is found at Asn-483 and Asn-492. A helical membrane pass occupies residues 514-536 (LIKSVFSSFIFSLAAIPGYMVLL). Residues 537–545 (RCVKSEEKS) are Cytoplasmic-facing. A helical membrane pass occupies residues 546–571 (IGVGLHAFFIRLLAGIPAPVYFGALI). Over 572-605 (DRTCLHWGTLKCGQPGACRMYDINRFRHIYLGLP) the chain is Extracellular. Residues 606-623 (AAVRGSSFLPAVFILILM) traverse the membrane as a helical segment. The Cytoplasmic segment spans residues 624–670 (RKFHFPGDIHSPDTELAEMKLTEKESECTDVCRSPKVENDGELKTKL). Position 634 is a phosphoserine (Ser-634).

Belongs to the organo anion transporter (TC 2.A.60) family. Binds to PDZK1. Interaction with PDZK1 is required for expression on hepatocyte surface. Highly expressed in liver, and at lower levels in kidney. Not detected in other tissues.

The protein localises to the basolateral cell membrane. The enzyme catalyses estrone 3-sulfate(out) + hydrogencarbonate(in) = estrone 3-sulfate(in) + hydrogencarbonate(out). The catalysed reaction is taurocholate(out) + hydrogencarbonate(in) = taurocholate(in) + hydrogencarbonate(out). It catalyses the reaction L-thyroxine(out) = L-thyroxine(in). It carries out the reaction prostaglandin E2(out) = prostaglandin E2(in). The enzyme catalyses 17beta-estradiol 17-O-(beta-D-glucuronate)(out) = 17beta-estradiol 17-O-(beta-D-glucuronate)(in). The catalysed reaction is dehydroepiandrosterone 3-sulfate(out) = dehydroepiandrosterone 3-sulfate(in). In terms of biological role, mediates the Na(+)-independent transport of organic anions such as steroid sulfate conjugates (dehydroepiandrosterone sulfate (DHEAS), 17-beta-glucuronosyl estradiol, estrone-3-sulfate), conjugated (taurocholate) and unconjugated (cholate) bile acids, prostaglandin E2 (PGE2) and L-thyroxine T4. Also capable of transporting sulfobromophthalein (BSP), ouabain and gadoxetate. Hydrogencarbonate/HCO3(-) acts as the probable counteranion that exchanges for organic anions. Shows a pH-sensitive substrate specificity which may be ascribed to the protonation state of the binding site and leads to a stimulation of substrate transport in an acidic microenvironment. The protein is Solute carrier organic anion transporter family member 1A1 of Mus musculus (Mouse).